A 180-amino-acid chain; its full sequence is ATP synthase subunit delta (180 aa).

The protein belongs to the ATPase delta chain family. F-type ATPases have 2 components, F(1) - the catalytic core - and F(0) - the membrane proton channel. F(1) has five subunits: alpha(3), beta(3), gamma(1), delta(1), epsilon(1). CF(0) has four main subunits: a(1), b(1), b'(1) and c(10-14). The alpha and beta chains form an alternating ring which encloses part of the gamma chain. F(1) is attached to F(0) by a central stalk formed by the gamma and epsilon chains, while a peripheral stalk is formed by the delta, b and b' chains.

The protein localises to the cellular thylakoid membrane. Functionally, f(1)F(0) ATP synthase produces ATP from ADP in the presence of a proton or sodium gradient. F-type ATPases consist of two structural domains, F(1) containing the extramembraneous catalytic core and F(0) containing the membrane proton channel, linked together by a central stalk and a peripheral stalk. During catalysis, ATP synthesis in the catalytic domain of F(1) is coupled via a rotary mechanism of the central stalk subunits to proton translocation. This protein is part of the stalk that links CF(0) to CF(1). It either transmits conformational changes from CF(0) to CF(1) or is implicated in proton conduction. The protein is ATP synthase subunit delta of Synechococcus elongatus (strain ATCC 33912 / PCC 7942 / FACHB-805) (Anacystis nidulans R2).